Here is a 65-residue protein sequence, read N- to C-terminus: Large ribosomal subunit protein bL35 (65 aa).

The protein belongs to the bacterial ribosomal protein bL35 family.

The chain is Large ribosomal subunit protein bL35 from Proteus mirabilis (strain HI4320).